The primary structure comprises 277 residues: Large ribosomal subunit protein uL2c (277 aa).

2 disordered regions span residues 36-56 (NKHSKKGRNNRGIITSRHRGG) and 225-259 (MNSVDHPHGGGEGKTSIGRKKPLTPWGRTALGSKS).

This sequence belongs to the universal ribosomal protein uL2 family. Part of the 50S ribosomal subunit.

The protein localises to the plastid. Its subcellular location is the chloroplast. In Psilotum nudum (Whisk fern), this protein is Large ribosomal subunit protein uL2c (rpl2).